We begin with the raw amino-acid sequence, 332 residues long: Biotin synthase (332 aa).

Positions 53–282 (YFGKKVKLNM…TKEIRISGGR (230 aa)) constitute a Radical SAM core domain. [4Fe-4S] cluster contacts are provided by Cys-71, Cys-75, and Cys-78. Residues Cys-115, Cys-147, Cys-207, and Arg-277 each contribute to the [2Fe-2S] cluster site.

The protein belongs to the radical SAM superfamily. Biotin synthase family. As to quaternary structure, homodimer. It depends on [4Fe-4S] cluster as a cofactor. [2Fe-2S] cluster serves as cofactor.

It catalyses the reaction (4R,5S)-dethiobiotin + (sulfur carrier)-SH + 2 reduced [2Fe-2S]-[ferredoxin] + 2 S-adenosyl-L-methionine = (sulfur carrier)-H + biotin + 2 5'-deoxyadenosine + 2 L-methionine + 2 oxidized [2Fe-2S]-[ferredoxin]. It functions in the pathway cofactor biosynthesis; biotin biosynthesis; biotin from 7,8-diaminononanoate: step 2/2. In terms of biological role, catalyzes the conversion of dethiobiotin (DTB) to biotin by the insertion of a sulfur atom into dethiobiotin via a radical-based mechanism. This chain is Biotin synthase, found in Bacillus anthracis.